Here is an 867-residue protein sequence, read N- to C-terminus: Alanine--tRNA ligase (867 aa).

Zn(2+) contacts are provided by His-559, His-563, Cys-661, and His-665.

Belongs to the class-II aminoacyl-tRNA synthetase family. Zn(2+) is required as a cofactor.

The protein resides in the cytoplasm. It catalyses the reaction tRNA(Ala) + L-alanine + ATP = L-alanyl-tRNA(Ala) + AMP + diphosphate. Functionally, catalyzes the attachment of alanine to tRNA(Ala) in a two-step reaction: alanine is first activated by ATP to form Ala-AMP and then transferred to the acceptor end of tRNA(Ala). Also edits incorrectly charged Ser-tRNA(Ala) and Gly-tRNA(Ala) via its editing domain. The sequence is that of Alanine--tRNA ligase from Aquifex aeolicus (strain VF5).